The following is a 108-amino-acid chain: Peptidyl-prolyl cis-trans isomerase FKBP1C (108 aa).

Positions 20 to 108 (SQTCVMHYTG…VFDVELLKLE (89 aa)) constitute a PPIase FKBP-type domain.

It belongs to the FKBP-type PPIase family. FKBP1 subfamily.

The enzyme catalyses [protein]-peptidylproline (omega=180) = [protein]-peptidylproline (omega=0). In terms of biological role, catalyzes the cis-trans isomerization of proline imidic peptide bonds in oligopeptides. This Homo sapiens (Human) protein is Peptidyl-prolyl cis-trans isomerase FKBP1C.